Consider the following 488-residue polypeptide: UDP-glycosyltransferase 92A1 (488 aa).

UDP-alpha-D-glucose-binding positions include S292, 358 to 360 (APQ), 375 to 383 (HCGWNSILE), and 397 to 400 (AAEQ).

It belongs to the UDP-glycosyltransferase family.

This chain is UDP-glycosyltransferase 92A1 (UGT92A1), found in Arabidopsis thaliana (Mouse-ear cress).